The sequence spans 537 residues: Light-independent protochlorophyllide reductase subunit B (537 aa).

Residue Asp36 participates in [4Fe-4S] cluster binding. Asp292 (proton donor) is an active-site residue. Position 428–429 (428–429 (GL)) interacts with substrate. Residues 459-483 (TAGETAGQATEAATAPATPGAPLTG) form a disordered region.

This sequence belongs to the ChlB/BchB/BchZ family. As to quaternary structure, protochlorophyllide reductase is composed of three subunits; BchL, BchN and BchB. Forms a heterotetramer of two BchB and two BchN subunits. Requires [4Fe-4S] cluster as cofactor.

It catalyses the reaction chlorophyllide a + oxidized 2[4Fe-4S]-[ferredoxin] + 2 ADP + 2 phosphate = protochlorophyllide a + reduced 2[4Fe-4S]-[ferredoxin] + 2 ATP + 2 H2O. Its pathway is porphyrin-containing compound metabolism; bacteriochlorophyll biosynthesis (light-independent). Functionally, component of the dark-operative protochlorophyllide reductase (DPOR) that uses Mg-ATP and reduced ferredoxin to reduce ring D of protochlorophyllide (Pchlide) to form chlorophyllide a (Chlide). This reaction is light-independent. The NB-protein (BchN-BchB) is the catalytic component of the complex. The polypeptide is Light-independent protochlorophyllide reductase subunit B (Chloroherpeton thalassium (strain ATCC 35110 / GB-78)).